Consider the following 127-residue polypeptide: Trefoil factor 2 (127 aa).

Positions 1-21 (EPQRPAPGHPPPAGAVCLTGA) are cleaved as a signal peptide. Gln22 is modified (pyrrolidone carboxylic acid). 2 consecutive P-type domains span residues 27–71 (CRCS…FKPL) and 77–120 (EECV…FFPM). 7 disulfides stabilise this stretch: Cys27/Cys125, Cys29/Cys56, Cys40/Cys55, Cys50/Cys67, Cys79/Cys105, Cys89/Cys104, and Cys99/Cys116.

In terms of tissue distribution, found in pancreas.

It localises to the secreted. Its function is as follows. Inhibits gastrointestinal motility and gastric acid secretion. Could function as a structural component of gastric mucus, possibly by stabilizing glycoproteins in the mucus gel through interactions with carbohydrate side chains. This is Trefoil factor 2 (TFF2) from Sus scrofa (Pig).